Here is a 412-residue protein sequence, read N- to C-terminus: CCA-adding enzyme (412 aa).

ATP-binding residues include S41 and K44. CTP is bound by residues S41 and K44. Mg(2+)-binding residues include D53, D55, and D106. ATP contacts are provided by H129, K149, and Y158. H129, K149, and Y158 together coordinate CTP.

This sequence belongs to the tRNA nucleotidyltransferase/poly(A) polymerase family. Archaeal CCA-adding enzyme subfamily. As to quaternary structure, homodimer. Requires Mg(2+) as cofactor.

It catalyses the reaction a tRNA precursor + 2 CTP + ATP = a tRNA with a 3' CCA end + 3 diphosphate. The enzyme catalyses a tRNA with a 3' CCA end + 2 CTP + ATP = a tRNA with a 3' CCACCA end + 3 diphosphate. Catalyzes the addition and repair of the essential 3'-terminal CCA sequence in tRNAs without using a nucleic acid template. Adds these three nucleotides in the order of C, C, and A to the tRNA nucleotide-73, using CTP and ATP as substrates and producing inorganic pyrophosphate. tRNA 3'-terminal CCA addition is required both for tRNA processing and repair. Also involved in tRNA surveillance by mediating tandem CCA addition to generate a CCACCA at the 3' terminus of unstable tRNAs. While stable tRNAs receive only 3'-terminal CCA, unstable tRNAs are marked with CCACCA and rapidly degraded. The sequence is that of CCA-adding enzyme from Saccharolobus solfataricus (strain ATCC 35092 / DSM 1617 / JCM 11322 / P2) (Sulfolobus solfataricus).